A 335-amino-acid chain; its full sequence is Nucleoid-associated protein PputGB1_0980 (335 aa).

This sequence belongs to the YejK family.

Its subcellular location is the cytoplasm. The protein localises to the nucleoid. In Pseudomonas putida (strain GB-1), this protein is Nucleoid-associated protein PputGB1_0980.